The sequence spans 545 residues: Chaperonin GroEL (545 aa).

Residues 29–32 (TLGP), Lys50, 86–90 (DGTTT), Gly415, and Asp495 contribute to the ATP site.

The protein belongs to the chaperonin (HSP60) family. As to quaternary structure, forms a cylinder of 14 subunits composed of two heptameric rings stacked back-to-back. Interacts with the co-chaperonin GroES.

Its subcellular location is the cytoplasm. It catalyses the reaction ATP + H2O + a folded polypeptide = ADP + phosphate + an unfolded polypeptide.. Functionally, together with its co-chaperonin GroES, plays an essential role in assisting protein folding. The GroEL-GroES system forms a nano-cage that allows encapsulation of the non-native substrate proteins and provides a physical environment optimized to promote and accelerate protein folding. This is Chaperonin GroEL from Porphyromonas gingivalis (strain ATCC 33277 / DSM 20709 / CIP 103683 / JCM 12257 / NCTC 11834 / 2561).